Reading from the N-terminus, the 474-residue chain is MAGKTLYDKLWDSHLVKQRDDGSALIYIDRHIIHEVTSPQAFEGLRLAKRKPWRIDSIIATPDHNVPTTAERKGGIGAIEDQVSRLQVQTLDDNCDEYGITEFKMNDPRQGIVHVIGPEQGATLPGMSVVCGDSHTSTHGAFGALAHGIGTSEVEHVLATQCLVAKKMKNMLVSVEGQLPFGVTAKDIVLAVIGKIGTAGGNGYAIEFAGSAIRDLSIEGRMTICNMSIEAGARVGMVATDEKTVEYVKGRPFAPKGAEWDLAVEAWKDLVSDPDAVFDTVVRLDAAQIKPQVSWGTSPEMVLAVDQNVPDPAQEPDLVKRGSIERALKYMGLKANQPITDIQLDRVFIGSCTNSRIEDLRAAADVAKGRKVASTIKQAIVVPGSGLIKAQAEKEGLDKVFIEAGFEWREPGCSMCLAMNPDRLGSGEHCASTSNRNFEGRQGAGGRTHLVSPAMAAAAAVNGRFIDVRDLIQH.

[4Fe-4S] cluster is bound by residues Cys352, Cys413, and Cys416.

It belongs to the aconitase/IPM isomerase family. LeuC type 1 subfamily. Heterodimer of LeuC and LeuD. [4Fe-4S] cluster serves as cofactor.

The enzyme catalyses (2R,3S)-3-isopropylmalate = (2S)-2-isopropylmalate. The protein operates within amino-acid biosynthesis; L-leucine biosynthesis; L-leucine from 3-methyl-2-oxobutanoate: step 2/4. Functionally, catalyzes the isomerization between 2-isopropylmalate and 3-isopropylmalate, via the formation of 2-isopropylmaleate. The polypeptide is 3-isopropylmalate dehydratase large subunit (Pseudomonas syringae pv. syringae (strain B728a)).